The following is a 138-amino-acid chain: MRTVSARSSVALVVIVAAVLVWTSSASVAPAPAPGSEETCGTVVGALMPCLPFVQGKEKEPSKGCCSGAKRLDGETKTGPQRVHACECIQTAMKTYSDIDGKLVSEVPKHCGIVDSKLPPIDVNMDCKTLGVLHYKGN.

A signal peptide spans 1 to 36 (MRTVSARSSVALVVIVAAVLVWTSSASVAPAPAPGS). 4 disulfide bridges follow: Cys40–Cys88, Cys50–Cys65, Cys66–Cys111, and Cys86–Cys127.

Belongs to the plant LTP family.

Plant non-specific lipid-transfer proteins transfer phospholipids as well as galactolipids across membranes. May play a role in wax or cutin deposition in the cell walls of expanding epidermal cells and certain secretory tissues. The polypeptide is Probable non-specific lipid-transfer protein 1 (Parietaria judaica (Pellitory-of-the-wall)).